The following is a 323-amino-acid chain: RNA polymerase II holoenzyme cyclin-like subunit (323 aa).

One can recognise a Cyclin N-terminal domain in the interval 45-176 (DSKQNGIEQS…LLEELESYLI (132 aa)).

It belongs to the cyclin family. Cyclin C subfamily. Component of the SRB8-11 complex which consists of SRB8, SSN2/SRB9, SSN3/SRB10 and SSN8/SRB11. The SRB8-11 complex associates with the Mediator complex. The SSN3/SRB10 and SSN8/SRB11 kinase-cyclin pair also associate with the RNA polymerase II holoenzyme. Interacts with ASK10.

It localises to the nucleus. Its function is as follows. Component of the SRB8-11 complex. The SRB8-11 complex is a regulatory module of the Mediator complex which is itself involved in regulation of basal and activated RNA polymerase II-dependent transcription. The SRB8-11 complex may be involved in the transcriptional repression of a subset of genes regulated by Mediator. It may inhibit the association of the Mediator complex with RNA polymerase II to form the holoenzyme complex. The SRB8-11 complex phosphorylates the C-terminal domain (CTD) of the largest subunit of RNA polymerase II RPB1 at serines 2 and 5. The SSN3/SRB10 and SSN8/SRB11 kinase-cyclin pair may also positively and negatively regulate numerous transcriptional activators in response to changes in nutritional and physiological conditions. The sequence is that of RNA polymerase II holoenzyme cyclin-like subunit (SSN8) from Saccharomyces cerevisiae (strain ATCC 204508 / S288c) (Baker's yeast).